A 94-amino-acid chain; its full sequence is Integration host factor subunit beta (94 aa).

It belongs to the bacterial histone-like protein family. Heterodimer of an alpha and a beta chain.

This protein is one of the two subunits of integration host factor, a specific DNA-binding protein that functions in genetic recombination as well as in transcriptional and translational control. The polypeptide is Integration host factor subunit beta (Brucella abortus (strain S19)).